The primary structure comprises 278 residues: Small ribosomal subunit protein uS3 (278 aa).

Positions 39 to 107 (LRKAISKKYV…KVQLNIVEIS (69 aa)) constitute a KH type-2 domain. A disordered region spans residues 255–278 (AEIPAEEKPKRVVKKAENITKEEE).

The protein belongs to the universal ribosomal protein uS3 family. As to quaternary structure, part of the 30S ribosomal subunit. Forms a tight complex with proteins S10 and S14.

Its function is as follows. Binds the lower part of the 30S subunit head. Binds mRNA in the 70S ribosome, positioning it for translation. The chain is Small ribosomal subunit protein uS3 from Dehalococcoides mccartyi (strain CBDB1).